The sequence spans 213 residues: Golgi to ER traffic protein 1 (213 aa).

The Lumenal segment spans residues 1-4 (MESW). A helical membrane pass occupies residues 5-25 (LLVILAFLVLERLWPLIDSLI). The Cytoplasmic portion of the chain corresponds to 26 to 98 (QRFAQANSTK…RTKASLKKVK (73 aa)). Residues 55 to 99 (AQDQYVKWTKNNRTLEKINKQIEEEKKQLLSQVDRTKASLKKVKL) adopt a coiled-coil conformation. Residues 99 to 119 (LVLITVPFTILKFYKGKMPIY) form a helical membrane-spanning segment. Over 120–158 (DLPKGLFPNYLQGLFQHGWVYLALGPLNIKKVGDGTHVT) the chain is Lumenal. Residues 159-175 (VSLAIWLFALLKVVSTL) traverse the membrane as a helical segment. Over 176–213 (GNIWESLTAPAIPAPTITTDPIDQTNESEKPPVDQPVD) the chain is Cytoplasmic. Positions 193-213 (TTDPIDQTNESEKPPVDQPVD) are disordered.

This sequence belongs to the WRB/GET1 family. Component of the Golgi to ER traffic (GET) complex, which is composed of GET1, GET2 and GET3. Within the complex, GET1 and GET2 form a heterotetramer which is stabilized by phosphatidylinositol binding and which binds to the GET3 homodimer.

The protein localises to the endoplasmic reticulum membrane. Its subcellular location is the golgi apparatus membrane. Required for the post-translational delivery of tail-anchored (TA) proteins to the endoplasmic reticulum. Together with GET2, acts as a membrane receptor for soluble GET3, which recognizes and selectively binds the transmembrane domain of TA proteins in the cytosol. The GET complex cooperates with the HDEL receptor ERD2 to mediate the ATP-dependent retrieval of resident ER proteins that contain a C-terminal H-D-E-L retention signal from the Golgi to the ER. The protein is Golgi to ER traffic protein 1 of Kluyveromyces lactis (strain ATCC 8585 / CBS 2359 / DSM 70799 / NBRC 1267 / NRRL Y-1140 / WM37) (Yeast).